We begin with the raw amino-acid sequence, 409 residues long: Arginine deiminase (409 aa).

C399 functions as the Amidino-cysteine intermediate in the catalytic mechanism.

This sequence belongs to the arginine deiminase family.

Its subcellular location is the cytoplasm. The catalysed reaction is L-arginine + H2O = L-citrulline + NH4(+). It functions in the pathway amino-acid degradation; L-arginine degradation via ADI pathway; carbamoyl phosphate from L-arginine: step 1/2. The protein is Arginine deiminase (arcA) of Borreliella afzelii (Borrelia afzelii).